The primary structure comprises 108 residues: UPF0060 membrane protein YnfA (108 aa).

Topologically, residues 1–5 are periplasmic; the sequence is MFKTT. The helical transmembrane segment at 6–26 threads the bilayer; it reads LLFFITALCEIIGCFLPWLWL. At 27 to 30 the chain is on the cytoplasmic side; it reads KRNG. The chain crosses the membrane as a helical span at residues 31 to 51; that stretch reads SIWLLLPAGVSLAFFVWLLTL. The Periplasmic portion of the chain corresponds to 52 to 60; the sequence is HPAASGRVY. Residues 61-81 traverse the membrane as a helical segment; sequence AAYGGVYVCTALLWLRFIDGV. Over 82-84 the chain is Cytoplasmic; it reads KLS. A helical membrane pass occupies residues 85–105; sequence LYDWSGALIALCGMLIIVAGW. The Periplasmic portion of the chain corresponds to 106-108; sequence GRA.

The protein belongs to the UPF0060 family.

Its subcellular location is the cell inner membrane. This Escherichia fergusonii (strain ATCC 35469 / DSM 13698 / CCUG 18766 / IAM 14443 / JCM 21226 / LMG 7866 / NBRC 102419 / NCTC 12128 / CDC 0568-73) protein is UPF0060 membrane protein YnfA.